Reading from the N-terminus, the 200-residue chain is Probable GTP-binding protein EngB (200 aa).

The EngB-type G domain maps to 22 to 194; it reads TLPEVAFVGR…WKEVLRLTLA (173 aa). GTP-binding positions include 30–37, 57–61, 75–78, 142–145, and 173–175; these read GRSNVGKS, GRTQL, DLPG, TKCD, and FSA. Mg(2+) is bound by residues serine 37 and threonine 59.

This sequence belongs to the TRAFAC class TrmE-Era-EngA-EngB-Septin-like GTPase superfamily. EngB GTPase family. It depends on Mg(2+) as a cofactor.

In terms of biological role, necessary for normal cell division and for the maintenance of normal septation. This is Probable GTP-binding protein EngB from Pelobacter propionicus (strain DSM 2379 / NBRC 103807 / OttBd1).